Here is a 633-residue protein sequence, read N- to C-terminus: DNA polymerase DpoZ (633 aa).

Belongs to the DNA polymerase type-A family. DpoZ subfamily.

It carries out the reaction DNA(n) + a 2'-deoxyribonucleoside 5'-triphosphate = DNA(n+1) + diphosphate. The catalysed reaction is dZTP + DNA(n) = DNA(n)-Z + diphosphate. In terms of biological role, DNA polymerase that preferentially incorporates the non-canonical base aminoadenine/dZTP instead of adenine into the synthesized DNA. More efficient in using dZTP instead of dATP as a substrate. In addition to this preference for dZTP, the phage also encodes a dATP triphosphohydrolase that removes dATP and its precursor dADP from the nucleotide pool of the host. This Vibrio phage phiVC8 protein is DNA polymerase DpoZ (dpoZ).